A 315-amino-acid polypeptide reads, in one-letter code: Mycothiol acetyltransferase (315 aa).

2 consecutive N-acetyltransferase domains span residues 8–145 (VETS…LPLD) and 163–315 (VSLR…DATA). Glu-39 lines the 1D-myo-inositol 2-(L-cysteinylamino)-2-deoxy-alpha-D-glucopyranoside pocket. Residues 81–83 (LVV) and 89–94 (HHGVGT) each bind acetyl-CoA. 1D-myo-inositol 2-(L-cysteinylamino)-2-deoxy-alpha-D-glucopyranoside contacts are provided by Glu-190, Lys-229, and Glu-243. 247 to 249 (LGV) is a binding site for acetyl-CoA. A 1D-myo-inositol 2-(L-cysteinylamino)-2-deoxy-alpha-D-glucopyranoside-binding site is contributed by Tyr-281. 286-291 (NTVAIR) serves as a coordination point for acetyl-CoA.

Belongs to the acetyltransferase family. MshD subfamily. In terms of assembly, monomer.

It catalyses the reaction 1D-myo-inositol 2-(L-cysteinylamino)-2-deoxy-alpha-D-glucopyranoside + acetyl-CoA = mycothiol + CoA + H(+). Its function is as follows. Catalyzes the transfer of acetyl from acetyl-CoA to desacetylmycothiol (Cys-GlcN-Ins) to form mycothiol. This chain is Mycothiol acetyltransferase, found in Sanguibacter keddieii (strain ATCC 51767 / DSM 10542 / NCFB 3025 / ST-74).